A 636-amino-acid chain; its full sequence is Poly(3-hydroxyalkanoate) polymerase subunit PhaC (636 aa).

Disordered regions lie at residues 1–38 (MYNKRIKRVLPPEEMVTDSKQESGGQKNGDKTGFDATD) and 129–152 (QGTRGMQGEPLPPEPDTRKDKRFS). Residues 143–152 (PDTRKDKRFS) show a composition bias toward basic and acidic residues. Residue Cys373 is part of the active site.

This sequence belongs to the PHA/PHB synthase family. Type I PhaC subfamily.

It is found in the cytoplasm. The catalysed reaction is (3R)-3-hydroxybutanoyl-CoA + [(3R)-hydroxybutanoate](n) = [(3R)-hydroxybutanoate](n+1) + CoA. Its pathway is biopolymer metabolism; poly-(R)-3-hydroxybutanoate biosynthesis. Polymerizes D(-)-3-hydroxybutyryl-CoA to create PHB which consists of thousands of hydroxybutyrate molecules linked end to end. PHB serves as an intracellular energy reserve material when cells grow under conditions of nutrient limitation. This is Poly(3-hydroxyalkanoate) polymerase subunit PhaC from Rhizobium etli (strain ATCC 51251 / DSM 11541 / JCM 21823 / NBRC 15573 / CFN 42).